Reading from the N-terminus, the 105-residue chain is Spermatogenesis-associated protein 8 (105 aa).

Expressed at high levels in adult testis, at moderate levels in sperm and at low levels in fetal testis. Not detected in other tissues.

The chain is Spermatogenesis-associated protein 8 (SPATA8) from Homo sapiens (Human).